A 167-amino-acid chain; its full sequence is NAD(P)H-quinone oxidoreductase subunit I, chloroplastic (167 aa).

2 4Fe-4S ferredoxin-type domains span residues 55–84 (GRIHFEFDKCIACEVCVRVCPIDLPVVDWK) and 95–124 (LNYSIDFGICIFCGNCVEYCPTNCLSMTEE). [4Fe-4S] cluster is bound by residues Cys-64, Cys-67, Cys-70, Cys-74, Cys-104, Cys-107, Cys-110, and Cys-114.

Belongs to the complex I 23 kDa subunit family. In terms of assembly, NDH is composed of at least 16 different subunits, 5 of which are encoded in the nucleus. It depends on [4Fe-4S] cluster as a cofactor.

It is found in the plastid. Its subcellular location is the chloroplast thylakoid membrane. The enzyme catalyses a plastoquinone + NADH + (n+1) H(+)(in) = a plastoquinol + NAD(+) + n H(+)(out). It carries out the reaction a plastoquinone + NADPH + (n+1) H(+)(in) = a plastoquinol + NADP(+) + n H(+)(out). Its function is as follows. NDH shuttles electrons from NAD(P)H:plastoquinone, via FMN and iron-sulfur (Fe-S) centers, to quinones in the photosynthetic chain and possibly in a chloroplast respiratory chain. The immediate electron acceptor for the enzyme in this species is believed to be plastoquinone. Couples the redox reaction to proton translocation, and thus conserves the redox energy in a proton gradient. The chain is NAD(P)H-quinone oxidoreductase subunit I, chloroplastic from Aethionema cordifolium (Lebanon stonecress).